A 713-amino-acid polypeptide reads, in one-letter code: Metal transporter CNNM3 (713 aa).

The chain crosses the membrane as a helical span at residues 7-29 (AVVGWLGWVLAAFCLGSTAGEAA). A glycan (N-linked (GlcNAc...) asparagine) is linked at N73. The region spanning 136–314 (EAAPPWALGL…DPYSDLSKGV (179 aa)) is the CNNM transmembrane domain. Helical transmembrane passes span 137-157 (AAPP…AAVA), 199-219 (CALG…AVLL), 227-247 (AVPA…VLPA), and 267-287 (LAVL…ELAA). 2 consecutive CBS domains span residues 324–385 (LTPL…CTPL) and 392–458 (YNHP…ILDE). Residues 664-713 (LPPSPENAELQAIPGSQTRLLGDKSRETAGSTNSRPSIPVEESPGRNPGV) form a disordered region. S667 and S706 each carry phosphoserine.

Belongs to the ACDP family. As to expression, widely expressed with highest levels in brain, kidney, liver, lung and heart.

It is found in the cell membrane. Its function is as follows. Probable metal transporter. This chain is Metal transporter CNNM3 (Cnnm3), found in Mus musculus (Mouse).